The primary structure comprises 182 residues: Protein SrpB (182 aa).

4 helical membrane passes run 11–31 (WLGL…IGLN), 43–63 (TFTL…QAEG), 73–93 (LSRT…GLIL), and 116–136 (IWIT…LGLI).

Belongs to the MgtC/SapB family.

It is found in the cell membrane. This chain is Protein SrpB (srpB), found in Synechococcus elongatus (strain ATCC 33912 / PCC 7942 / FACHB-805) (Anacystis nidulans R2).